The chain runs to 391 residues: NAD(P)H-quinone oxidoreductase subunit H, chloroplastic (391 aa).

It belongs to the complex I 49 kDa subunit family. As to quaternary structure, NDH is composed of at least 16 different subunits, 5 of which are encoded in the nucleus.

The protein resides in the plastid. It is found in the chloroplast thylakoid membrane. It catalyses the reaction a plastoquinone + NADH + (n+1) H(+)(in) = a plastoquinol + NAD(+) + n H(+)(out). The catalysed reaction is a plastoquinone + NADPH + (n+1) H(+)(in) = a plastoquinol + NADP(+) + n H(+)(out). Its function is as follows. NDH shuttles electrons from NAD(P)H:plastoquinone, via FMN and iron-sulfur (Fe-S) centers, to quinones in the photosynthetic chain and possibly in a chloroplast respiratory chain. The immediate electron acceptor for the enzyme in this species is believed to be plastoquinone. Couples the redox reaction to proton translocation, and thus conserves the redox energy in a proton gradient. The chain is NAD(P)H-quinone oxidoreductase subunit H, chloroplastic from Physcomitrium patens (Spreading-leaved earth moss).